The primary structure comprises 211 residues: Ribosomal RNA small subunit methyltransferase G (211 aa).

S-adenosyl-L-methionine contacts are provided by residues Gly-81, Leu-86, 132–133 (AE), and Arg-147.

The protein belongs to the methyltransferase superfamily. RNA methyltransferase RsmG family.

Its subcellular location is the cytoplasm. The enzyme catalyses guanosine(527) in 16S rRNA + S-adenosyl-L-methionine = N(7)-methylguanosine(527) in 16S rRNA + S-adenosyl-L-homocysteine. In terms of biological role, specifically methylates the N7 position of guanine in position 527 of 16S rRNA. This is Ribosomal RNA small subunit methyltransferase G from Dichelobacter nodosus (strain VCS1703A).